The following is a 277-amino-acid chain: Protein OPG166 (277 aa).

Asparagine 29 and asparagine 58 each carry an N-linked (GlcNAc...) asparagine; by host glycan. 5 helical membrane-spanning segments follow: residues 124–144 (TMLMFIFTGITLFLLFLEITY), 156–176 (GILQVFGCVIAMIELCGAFLF), 186–206 (IIGLLMMTLPSIFLIITKVFS), 219–239 (LIIYYQLAGYILTVLGLGLSL), and 247–267 (LLLSGLGTIMVSEHFSLLFLV).

The protein belongs to the orthopoxvirus OPG166 protein family.

Its subcellular location is the host membrane. Its function is as follows. Promotes, when overexpressed, the influx of extracellular Ca(2+), leading to membrane permeability and host cell necrosis. In Vaccinia virus (strain Copenhagen) (VACV), this protein is Protein OPG166 (OPG166).